The chain runs to 157 residues: D-aminoacyl-tRNA deacylase (157 aa).

Residues 137 to 138 (GP) carry the Gly-cisPro motif, important for rejection of L-amino acids motif.

This sequence belongs to the DTD family. In terms of assembly, homodimer.

The protein localises to the cytoplasm. It carries out the reaction glycyl-tRNA(Ala) + H2O = tRNA(Ala) + glycine + H(+). The catalysed reaction is a D-aminoacyl-tRNA + H2O = a tRNA + a D-alpha-amino acid + H(+). An aminoacyl-tRNA editing enzyme that deacylates mischarged D-aminoacyl-tRNAs. Also deacylates mischarged glycyl-tRNA(Ala), protecting cells against glycine mischarging by AlaRS. Acts via tRNA-based rather than protein-based catalysis; rejects L-amino acids rather than detecting D-amino acids in the active site. By recycling D-aminoacyl-tRNA to D-amino acids and free tRNA molecules, this enzyme counteracts the toxicity associated with the formation of D-aminoacyl-tRNA entities in vivo and helps enforce protein L-homochirality. The sequence is that of D-aminoacyl-tRNA deacylase from Cyanothece sp. (strain PCC 7425 / ATCC 29141).